A 495-amino-acid polypeptide reads, in one-letter code: Leucine aminopeptidase 2 (495 aa).

The signal sequence occupies residues 1–21 (MKSQLLSLAVAVSTISQGVVG). Residues 124–218 (PPANKIMAEL…EDGKNLASLV (95 aa)) form the PA domain. Asn142 and Asn235 each carry an N-linked (GlcNAc...) asparagine glycan. Residues His259 and Asp271 each coordinate Zn(2+). Asn272 is a glycosylation site (N-linked (GlcNAc...) asparagine). Catalysis depends on Glu303, which acts as the Proton acceptor. 2 residues coordinate Zn(2+): Glu304 and Asp332. A glycan (N-linked (GlcNAc...) asparagine) is linked at Asn352. Zn(2+) is bound at residue His430.

This sequence belongs to the peptidase M28 family. M28A subfamily. As to quaternary structure, monomer. The cofactor is Zn(2+).

The protein localises to the secreted. Its function is as follows. Extracellular aminopeptidase that releases a wide variety of amino acids from natural peptides and contributes to pathogenicity. This is Leucine aminopeptidase 2 (LAP2) from Trichophyton equinum (Horse ringworm fungus).